A 335-amino-acid chain; its full sequence is MPIRHCIVHLIDKKPDGSPAVLHARDSELAASDAIENLLADLNDSYNAKQGKAWGLFHGESGAYPFSGWLKQYLDEEKDFATFSRVAIEHLQKLMEESNLSTGGHVLFAHYQQGMTEYLAIALLHHSEGVAVNAELDVTPSRHLDLGQLHLAARVNLSEWKNNQNSKQYISFIKGKNGKKVSDYFRDFIGCQEGVDGPGETRTLLKAFSDFVEKEDLPEESAREKTQTLVDYATTQTKLGEPVTLEELSSLIDEDRPEAFYDHIRNSDYGLSPEIPADKRTLNQFRRFTGRAEGLSISFEAHLLGSKVEYDEEAGTLVIKGLPTQLIDQLKRRKD.

It belongs to the YejK family.

The protein localises to the cytoplasm. The protein resides in the nucleoid. This is Nucleoid-associated protein PSEEN4449 from Pseudomonas entomophila (strain L48).